Here is a 521-residue protein sequence, read N- to C-terminus: 4-cresol dehydrogenase [hydroxylating] flavoprotein subunit (521 aa).

Positions 54 to 268 constitute an FAD-binding PCMH-type domain; that stretch reads AAHAPSAAVT…VEIVDALRPL (215 aa). Y384 bears the O-8alpha-FAD tyrosine mark.

As to quaternary structure, tetramer of two cytochrome subunits and two flavoprotein subunits. It depends on FAD as a cofactor.

It catalyses the reaction 4-methylphenol + 4 oxidized [azurin] + H2O = 4 reduced [azurin] + 4-hydroxybenzaldehyde + 4 H(+). Its pathway is aromatic compound metabolism; p-cresol degradation. Functionally, catalyzes the azurin dependent hydroxylation of the methyl group of 4-methylphenol to form 4-hydroxybenzaldehyde. The chain is 4-cresol dehydrogenase [hydroxylating] flavoprotein subunit (pchF) from Pseudomonas putida (Arthrobacter siderocapsulatus).